Reading from the N-terminus, the 549-residue chain is Oxygen-dependent choline dehydrogenase (549 aa).

An FAD-binding site is contributed by 4–33 (DFVIIGSGSAGSALAYRLSEDGKNSVLVIE). The Proton acceptor role is filled by His-465. The disordered stretch occupies residues 530 to 549 (PLARSNQEPWINPRAAVSDR).

It belongs to the GMC oxidoreductase family. FAD serves as cofactor.

It carries out the reaction choline + A = betaine aldehyde + AH2. It catalyses the reaction betaine aldehyde + NAD(+) + H2O = glycine betaine + NADH + 2 H(+). It participates in amine and polyamine biosynthesis; betaine biosynthesis via choline pathway; betaine aldehyde from choline (cytochrome c reductase route): step 1/1. Its function is as follows. Involved in the biosynthesis of the osmoprotectant glycine betaine. Catalyzes the oxidation of choline to betaine aldehyde and betaine aldehyde to glycine betaine at the same rate. In Rhizobium etli (strain ATCC 51251 / DSM 11541 / JCM 21823 / NBRC 15573 / CFN 42), this protein is Oxygen-dependent choline dehydrogenase.